The primary structure comprises 204 residues: Glycerol-3-phosphate acyltransferase (204 aa).

4 helical membrane-spanning segments follow: residues 8–28, 76–96, 122–142, and 166–186; these read NAQFFIAAYLIGAIPFGLLLA, GVLVLLFAYFYGVSEATLWGI, MGVMMFMLPLETIIALVVWAL, and FILHPDMAHAPVIIIGFVLLY.

The protein belongs to the PlsY family. Probably interacts with PlsX.

It is found in the cell inner membrane. It carries out the reaction an acyl phosphate + sn-glycerol 3-phosphate = a 1-acyl-sn-glycero-3-phosphate + phosphate. It functions in the pathway lipid metabolism; phospholipid metabolism. In terms of biological role, catalyzes the transfer of an acyl group from acyl-phosphate (acyl-PO(4)) to glycerol-3-phosphate (G3P) to form lysophosphatidic acid (LPA). This enzyme utilizes acyl-phosphate as fatty acyl donor, but not acyl-CoA or acyl-ACP. This is Glycerol-3-phosphate acyltransferase from Sulfurimonas denitrificans (strain ATCC 33889 / DSM 1251) (Thiomicrospira denitrificans (strain ATCC 33889 / DSM 1251)).